The sequence spans 187 residues: Putative protein YbeM (187 aa).

Positions 1–163 constitute a CN hydrolase domain; the sequence is MMTTILTIHV…PALIMAEVTP (163 aa).

Belongs to the carbon-nitrogen hydrolase superfamily. NIT1/NIT2 family.

Its function is as follows. Pseudogene resulting from a nucleotide deletion that introduces a premature stop codon at position 66. This is the C-terminal fragment. The intact protein (AC A0A140NCB4) hydrolyzes deaminated glutathione (dGSH, 2-oxoglutaramate) to alpha-ketoglutarate (alpha-KG) and cysteinylglycine, has less activity against alpha-ketoglutaramate (a-KGM) and no activity on glutathione or L-glutamine. May function as a metabolite repair enzyme. The polypeptide is Putative protein YbeM (ybeM) (Escherichia coli (strain K12)).